The chain runs to 545 residues: Delta 8-(E)-sphingolipid desaturase (545 aa).

The Cytochrome b5 heme-binding domain maps to 1–82; that stretch reads MASHTKDALL…MLAFQIGRIQ (82 aa). Heme contacts are provided by H42 and H65. The segment at 97 to 124 is disordered; the sequence is FRHYDENADSEEDDTSGQSQPPSPIFDA. Residues 227–247 traverse the membrane as a helical segment; the sequence is LGWYSVSAVFLGCFWHQLVFS. A Histidine box-1 motif is present at residues 249-253; the sequence is HDAGH. Residues 262 to 282 traverse the membrane as a helical segment; the sequence is VDSIIGILIADFLGGLSLGWW. The Histidine box-2 signature appears at 286–290; it reads HNVHH. A run of 2 helical transmembrane segments spans residues 382–402 and 408–428; these read IAGQIFFWIWFGYGVLYCSIP and LSFLFISHMVTAPVHVQITLS. The Histidine box-3 motif lies at 470–474; it reads QAIHH.

The protein belongs to the fatty acid desaturase type 1 family.

The protein localises to the membrane. The catalysed reaction is an N-acylsphing-4-enine + 2 Fe(II)-[cytochrome b5] + O2 + 2 H(+) = a (4E,8E)-4-sphinga-4,8-dienine ceramide + 2 Fe(III)-[cytochrome b5] + 2 H2O. The protein operates within lipid metabolism; sphingolipid metabolism. Its function is as follows. Delta(8)-fatty-acid desaturase which introduces a double bond at the 8-position in the long-chain base (LCB) of ceramides. Required for the formation of the di-unsaturated sphingoid base (E,E)-sphinga-4,8-dienine during glucosylceramide (GluCer) biosynthesis. Plays an important role in conidiation. This chain is Delta 8-(E)-sphingolipid desaturase, found in Emericella nidulans (strain FGSC A4 / ATCC 38163 / CBS 112.46 / NRRL 194 / M139) (Aspergillus nidulans).